Reading from the N-terminus, the 100-residue chain is MYB-like transcription factor TCL2 (100 aa).

In terms of domain architecture, Myb-like spans 37–74 (TEQEEDLIFRMHRLVGDRWDLIAGRVVGREAKDIERYW).

In terms of assembly, interacts with GL3. As to expression, expressed in cotyledons, petioles, rosette leaves, hydathodes, cauline leaves, stems, pedicels and flower buds.

The protein localises to the nucleus. MYB-type transcription factor involved in trichome cell specification. Acts as a negative regulator of trichome patterning and formation. May function by suppressing the expression of GL3. The polypeptide is MYB-like transcription factor TCL2 (TCL2) (Arabidopsis thaliana (Mouse-ear cress)).